We begin with the raw amino-acid sequence, 270 residues long: Probable septum site-determining protein MinC (270 aa).

Positions 105–129 (DRRAPSSKAADEAPVQQAEPAAPAA) are disordered. Residues 116–129 (EAPVQQAEPAAPAA) are compositionally biased toward low complexity.

This sequence belongs to the MinC family. In terms of assembly, interacts with MinD and FtsZ.

Its function is as follows. Cell division inhibitor that blocks the formation of polar Z ring septums. Rapidly oscillates between the poles of the cell to destabilize FtsZ filaments that have formed before they mature into polar Z rings. Prevents FtsZ polymerization. This chain is Probable septum site-determining protein MinC, found in Burkholderia pseudomallei (strain 668).